The sequence spans 623 residues: Probable lysophospholipase 5 (623 aa).

An N-terminal signal peptide occupies residues 1–19 (MKLSSFGLFLALQLLPALG). In terms of domain architecture, PLA2c spans 67-607 (ACPSGSLLRP…NQYCWNGTIA (541 aa)). 19 N-linked (GlcNAc...) asparagine glycosylation sites follow: N118, N153, N187, N232, N256, N264, N293, N331, N360, N367, N400, N403, N474, N508, N513, N537, N564, N586, and N603.

This sequence belongs to the lysophospholipase family.

It is found in the secreted. It catalyses the reaction a 1-acyl-sn-glycero-3-phosphocholine + H2O = sn-glycerol 3-phosphocholine + a fatty acid + H(+). In terms of biological role, catalyzes the release of fatty acids from lysophospholipids. The polypeptide is Probable lysophospholipase 5 (plb5) (Schizosaccharomyces pombe (strain 972 / ATCC 24843) (Fission yeast)).